We begin with the raw amino-acid sequence, 59 residues long: Small ribosomal subunit protein bS21 (59 aa).

Residues 40-59 (KPSVKRKKKSEAARKRKSFR) are disordered. The segment covering 43-59 (VKRKKKSEAARKRKSFR) has biased composition (basic residues).

This sequence belongs to the bacterial ribosomal protein bS21 family.

This Desulforamulus reducens (strain ATCC BAA-1160 / DSM 100696 / MI-1) (Desulfotomaculum reducens) protein is Small ribosomal subunit protein bS21.